A 120-amino-acid polypeptide reads, in one-letter code: MKINSKQTRIHKHRRVRKKVQGTASRPRLCVFRSNKHIYAQVIDDIKGITLVAASSINLKLQSSITLGSNCEASRSVGKTLAERSIKEGIENVVFDRGGKLYHGRVEALAEAAKEAGMVF.

It belongs to the universal ribosomal protein uL18 family. In terms of assembly, part of the 50S ribosomal subunit; contacts the 5S rRNA.

It localises to the plastid. It is found in the chloroplast. Its function is as follows. Binds 5S rRNA, forms part of the central protuberance of the 50S subunit. The polypeptide is Large ribosomal subunit protein uL18c (rpl18) (Porphyra purpurea (Red seaweed)).